Consider the following 360-residue polypeptide: Photosystem II protein D1 (360 aa).

3 helical membrane-spanning segments follow: residues 29 to 46 (YIGWFGCLMIPTLLTAAS), 118 to 133 (HFLIGVACWMGREWEL), and 142 to 156 (WIFVAFSAPVAAASA). Residue His118 participates in chlorophyll a binding. Residue Trp126 coordinates pheophytin a. Asp170 and Glu189 together coordinate [CaMn4O5] cluster. The chain crosses the membrane as a helical span at residues 197-218 (FHMAGVAGVFGGSLFSAMHGSL). His198 contacts chlorophyll a. Residues His215 and 264 to 265 (SF) contribute to the a quinone site. His215 provides a ligand contact to Fe cation. Position 272 (His272) interacts with Fe cation. Residues 274 to 288 (FLAAWPVVGIWLTAL) form a helical membrane-spanning segment. His332, Glu333, Asp342, and Ala344 together coordinate [CaMn4O5] cluster. The propeptide occupies 345-360 (SNEILPVAISAPSVVG).

It belongs to the reaction center PufL/M/PsbA/D family. PSII is composed of 1 copy each of membrane proteins PsbA, PsbB, PsbC, PsbD, PsbE, PsbF, PsbH, PsbI, PsbJ, PsbK, PsbL, PsbM, PsbT, PsbX, PsbY, PsbZ, Psb30/Ycf12, at least 3 peripheral proteins of the oxygen-evolving complex and a large number of cofactors. It forms dimeric complexes. The cofactor is The D1/D2 heterodimer binds P680, chlorophylls that are the primary electron donor of PSII, and subsequent electron acceptors. It shares a non-heme iron and each subunit binds pheophytin, quinone, additional chlorophylls, carotenoids and lipids. D1 provides most of the ligands for the Mn4-Ca-O5 cluster of the oxygen-evolving complex (OEC). There is also a Cl(-1) ion associated with D1 and D2, which is required for oxygen evolution. The PSII complex binds additional chlorophylls, carotenoids and specific lipids.. Tyr-161 forms a radical intermediate that is referred to as redox-active TyrZ, YZ or Y-Z. In terms of processing, C-terminally processed by CTPA; processing is essential to allow assembly of the oxygen-evolving complex and thus photosynthetic growth.

The protein localises to the plastid. Its subcellular location is the chloroplast thylakoid membrane. It carries out the reaction 2 a plastoquinone + 4 hnu + 2 H2O = 2 a plastoquinol + O2. In terms of biological role, photosystem II (PSII) is a light-driven water:plastoquinone oxidoreductase that uses light energy to abstract electrons from H(2)O, generating O(2) and a proton gradient subsequently used for ATP formation. It consists of a core antenna complex that captures photons, and an electron transfer chain that converts photonic excitation into a charge separation. The D1/D2 (PsbA/PsbD) reaction center heterodimer binds P680, the primary electron donor of PSII as well as several subsequent electron acceptors. In Ectocarpus siliculosus (Brown alga), this protein is Photosystem II protein D1.